The chain runs to 316 residues: Methionyl-tRNA formyltransferase (316 aa).

111-114 (GLLP) contacts (6S)-5,6,7,8-tetrahydrofolate.

The protein belongs to the Fmt family.

It catalyses the reaction L-methionyl-tRNA(fMet) + (6R)-10-formyltetrahydrofolate = N-formyl-L-methionyl-tRNA(fMet) + (6S)-5,6,7,8-tetrahydrofolate + H(+). Attaches a formyl group to the free amino group of methionyl-tRNA(fMet). The formyl group appears to play a dual role in the initiator identity of N-formylmethionyl-tRNA by promoting its recognition by IF2 and preventing the misappropriation of this tRNA by the elongation apparatus. The polypeptide is Methionyl-tRNA formyltransferase (Chlamydia trachomatis serovar A (strain ATCC VR-571B / DSM 19440 / HAR-13)).